Reading from the N-terminus, the 324-residue chain is Lignin-forming anionic peroxidase (324 aa).

An N-terminal signal peptide occupies residues 1–22; that stretch reads MSFLRFVGAILFLVAIFGASNA. A Pyrrolidone carboxylic acid modification is found at Gln-23. Cystine bridges form between Cys-33/Cys-111, Cys-66/Cys-71, Cys-117/Cys-320, and Cys-196/Cys-228. N-linked (GlcNAc...) asparagine glycosylation is present at Asn-35. The active-site Proton acceptor is His-64. Residues Asp-65, Val-68, Gly-70, Asp-72, and Ser-74 each contribute to the Ca(2+) site. Asn-150 carries an N-linked (GlcNAc...) asparagine glycan. Pro-159 contributes to the substrate binding site. Residue His-189 coordinates heme b. Thr-190 contributes to the Ca(2+) binding site. A glycan (N-linked (GlcNAc...) asparagine) is linked at Asn-207. Asp-242, Thr-245, and Asp-250 together coordinate Ca(2+).

This sequence belongs to the peroxidase family. Classical plant (class III) peroxidase subfamily. Requires Ca(2+) as cofactor. The cofactor is heme b.

Its subcellular location is the secreted. It catalyses the reaction 2 a phenolic donor + H2O2 = 2 a phenolic radical donor + 2 H2O. Removal of H(2)O(2), oxidation of toxic reductants, biosynthesis and degradation of lignin, suberization, auxin catabolism, response to environmental stresses such as wounding, pathogen attack and oxidative stress. These functions might be dependent on each isozyme/isoform in each plant tissue. Its function is as follows. Plays an integral role in secondary cell wall biosynthesis by the polymerization of cinnamyl alcohols into lignin and by forming rigid cross-links between cellulose, pectin, hydroxy-proline-rich glycoproteins, and lignin. The polypeptide is Lignin-forming anionic peroxidase (Nicotiana tabacum (Common tobacco)).